A 303-amino-acid chain; its full sequence is Crk-like protein (303 aa).

The 89-residue stretch at 14 to 102 folds into the SH2 domain; that stretch reads WYMGPVSRQE…LDTTTLIEPA (89 aa). Residues 123-183 enclose the SH3 1 domain; that stretch reads ENLEYVRTLY…PVPYVEKLVR (61 aa). Residue tyrosine 127 is modified to Phosphotyrosine. The disordered stretch occupies residues 184–204; it reads SSPHGKHGNRNSNSYGIPEPA. Tyrosine 207 is modified (phosphotyrosine). The SH3 2 domain occupies 235-296; it reads NGPVFAKAIQ…PFTHVKIFDP (62 aa).

It belongs to the CRK family. In terms of assembly, interacts with INPP5D/SHIP1. Interacts with DOCK2 and EPOR. Interacts with phosphorylated CBLB and IRS4. Interacts with BCAR1/CAS and NEDD9/HEF1.

In terms of biological role, may mediate the transduction of intracellular signals. This is Crk-like protein from Rattus norvegicus (Rat).